A 222-amino-acid polypeptide reads, in one-letter code: Flagellar L-ring protein (222 aa).

An N-terminal signal peptide occupies residues 1 to 21 (MQTFLYPRTWLILGLLLLGSG). Cys22 is lipidated: N-palmitoyl cysteine. Cys22 carries the S-diacylglycerol cysteine lipid modification.

This sequence belongs to the FlgH family. The basal body constitutes a major portion of the flagellar organelle and consists of four rings (L,P,S, and M) mounted on a central rod.

It is found in the cell outer membrane. Its subcellular location is the bacterial flagellum basal body. Functionally, assembles around the rod to form the L-ring and probably protects the motor/basal body from shearing forces during rotation. The polypeptide is Flagellar L-ring protein (Methylobacillus flagellatus (strain ATCC 51484 / DSM 6875 / VKM B-1610 / KT)).